Reading from the N-terminus, the 1479-residue chain is DNA-directed RNA polymerase subunit beta'' (1479 aa).

The Zn(2+) site is built by Cys220, Cys296, Cys303, and Cys306. Disordered regions lie at residues 618 to 640 (TRAE…REDE) and 663 to 756 (LEDE…KKEG). Composition is skewed to acidic residues over residues 622 to 631 (DSEEEYETLE), 704 to 717 (DEYG…EDEY), and 731 to 749 (LEED…PEED).

The protein belongs to the RNA polymerase beta' chain family. RpoC2 subfamily. As to quaternary structure, in plastids the minimal PEP RNA polymerase catalytic core is composed of four subunits: alpha, beta, beta', and beta''. When a (nuclear-encoded) sigma factor is associated with the core the holoenzyme is formed, which can initiate transcription. Zn(2+) is required as a cofactor.

The protein localises to the plastid. Its subcellular location is the chloroplast. It carries out the reaction RNA(n) + a ribonucleoside 5'-triphosphate = RNA(n+1) + diphosphate. In terms of biological role, DNA-dependent RNA polymerase catalyzes the transcription of DNA into RNA using the four ribonucleoside triphosphates as substrates. The sequence is that of DNA-directed RNA polymerase subunit beta'' from Triticum aestivum (Wheat).